The chain runs to 188 residues: Preprocaerulein type-1 (188 aa).

An N-terminal signal peptide occupies residues methionine 1–alanine 26. A propeptide spanning residues aspartate 27–glycine 170 is cleaved from the precursor. The tract at residues leucine 152–aspartate 188 is disordered. At tyrosine 174 the chain carries Sulfotyrosine. The residue at position 180 (phenylalanine 180) is a Phenylalanine amide. The propeptide occupies asparagine 184–aspartate 188.

The protein belongs to the gastrin/cholecystokinin family. As to expression, expressed by the skin glands.

Its subcellular location is the secreted. The pharmacological activities of caerulein are quite similar to the physiological activities of gastrin and related peptides. The chain is Preprocaerulein type-1 from Xenopus laevis (African clawed frog).